A 68-amino-acid polypeptide reads, in one-letter code: Large ribosomal subunit protein bL32 (68 aa).

Positions 1–20 are disordered; sequence MAVQQNKVSKSRRNNRRAHD.

Belongs to the bacterial ribosomal protein bL32 family.

This chain is Large ribosomal subunit protein bL32, found in Ruegeria sp. (strain TM1040) (Silicibacter sp.).